We begin with the raw amino-acid sequence, 177 residues long: Alkyl hydroperoxide reductase AhpD (177 aa).

The Proton donor role is filled by cysteine 130. Residues cysteine 130 and cysteine 133 are joined by a disulfide bond. Cysteine 133 functions as the Cysteine sulfenic acid (-SOH) intermediate in the catalytic mechanism.

It belongs to the AhpD family. In terms of assembly, homotrimer.

It catalyses the reaction N(6)-[(R)-dihydrolipoyl]-L-lysyl-[lipoyl-carrier protein] + a hydroperoxide = N(6)-[(R)-lipoyl]-L-lysyl-[lipoyl-carrier protein] + an alcohol + H2O. Functionally, antioxidant protein with alkyl hydroperoxidase activity. Required for the reduction of the AhpC active site cysteine residues and for the regeneration of the AhpC enzyme activity. The sequence is that of Alkyl hydroperoxide reductase AhpD from Corynebacterium aurimucosum (strain ATCC 700975 / DSM 44827 / CIP 107346 / CN-1) (Corynebacterium nigricans).